We begin with the raw amino-acid sequence, 88 residues long: Small ribosomal subunit protein uS17 (88 aa).

It belongs to the universal ribosomal protein uS17 family. In terms of assembly, part of the 30S ribosomal subunit.

Its function is as follows. One of the primary rRNA binding proteins, it binds specifically to the 5'-end of 16S ribosomal RNA. The chain is Small ribosomal subunit protein uS17 from Prochlorococcus marinus subsp. pastoris (strain CCMP1986 / NIES-2087 / MED4).